Consider the following 401-residue polypeptide: Imidazolonepropionase (401 aa).

Fe(3+) contacts are provided by His-66 and His-68. 2 residues coordinate Zn(2+): His-66 and His-68. 4-imidazolone-5-propanoate contacts are provided by Arg-75, Tyr-138, and His-171. N-formimidoyl-L-glutamate is bound at residue Tyr-138. His-236 lines the Fe(3+) pocket. Residue His-236 participates in Zn(2+) binding. Gln-239 lines the 4-imidazolone-5-propanoate pocket. Residue Asp-311 participates in Fe(3+) binding. Asp-311 provides a ligand contact to Zn(2+). Residues Asn-313 and Gly-315 each contribute to the N-formimidoyl-L-glutamate site. 4-imidazolone-5-propanoate is bound at residue Thr-316.

Belongs to the metallo-dependent hydrolases superfamily. HutI family. Zn(2+) is required as a cofactor. Fe(3+) serves as cofactor.

It localises to the cytoplasm. It catalyses the reaction 4-imidazolone-5-propanoate + H2O = N-formimidoyl-L-glutamate. The protein operates within amino-acid degradation; L-histidine degradation into L-glutamate; N-formimidoyl-L-glutamate from L-histidine: step 3/3. Its function is as follows. Catalyzes the hydrolytic cleavage of the carbon-nitrogen bond in imidazolone-5-propanoate to yield N-formimidoyl-L-glutamate. It is the third step in the universal histidine degradation pathway. This Pseudomonas fluorescens (strain ATCC BAA-477 / NRRL B-23932 / Pf-5) protein is Imidazolonepropionase.